Here is a 383-residue protein sequence, read N- to C-terminus: U-box domain-containing protein 63 (383 aa).

Positions 166-186 (PDGNVSNSHRNTQQKRDFASV) are disordered. The U-box domain occupies 201–273 (SLKAILSDPV…HAFRQEEDSD (73 aa)).

It carries out the reaction S-ubiquitinyl-[E2 ubiquitin-conjugating enzyme]-L-cysteine + [acceptor protein]-L-lysine = [E2 ubiquitin-conjugating enzyme]-L-cysteine + N(6)-ubiquitinyl-[acceptor protein]-L-lysine.. Its pathway is protein modification; protein ubiquitination. Functions as an E3 ubiquitin ligase. This chain is U-box domain-containing protein 63 (PUB63), found in Arabidopsis thaliana (Mouse-ear cress).